The sequence spans 503 residues: Anaerobic nitric oxide reductase flavorubredoxin (503 aa).

A zinc metallo-hydrolase region spans residues 30-210; sequence LQGSSYNSYL…PFSRLVTAKI (181 aa). Fe cation contacts are provided by His79, Glu81, Asp83, His147, Asp166, and His227. The 140-residue stretch at 254 to 393 folds into the Flavodoxin-like domain; sequence ITLFYDTMSN…ICREHGREIA (140 aa). Residues 260 to 264 and 342 to 369 contribute to the FMN site; these read TMSNN and AFGS…ETTL. In terms of domain architecture, Rubredoxin-like spans 451-502; sequence NGCMQCSVCQWIYDPALGEPMQDVTPGTMWSDVPDSFLCPECGLGKDVFNPI. Fe cation contacts are provided by Cys456, Cys459, Cys489, and Cys492.

The protein in the N-terminal section; belongs to the zinc metallo-hydrolase group 3 family. Homotetramer. The cofactor is Fe cation. It depends on FMN as a cofactor.

It is found in the cytoplasm. The protein operates within nitrogen metabolism; nitric oxide reduction. Its function is as follows. Anaerobic nitric oxide reductase; uses NADH to detoxify nitric oxide (NO), protecting several 4Fe-4S NO-sensitive enzymes. Has at least 2 reductase partners, only one of which (NorW, flavorubredoxin reductase) has been identified. NO probably binds to the di-iron center; electrons enter from the NorW at rubredoxin and are transferred sequentially to the FMN center and the di-iron center. Also able to function as an aerobic oxygen reductase. The polypeptide is Anaerobic nitric oxide reductase flavorubredoxin (Pectobacterium carotovorum subsp. carotovorum (strain PC1)).